A 369-amino-acid chain; its full sequence is MSKHYYIGLMSGTSMDGVDAVLVDFSDDKITLVDTHTEPLPSHLLSGLQRLCQSGSDEINRMGILDRSVGKLFAQAVEGLLTKSGVDRHQIMAIGSHGQTVRHMPNLELGFTLQIGDPNTIAALTGIDVIADFRRKDIALGGQGAPLVPAFHQQLFARTGHQRMILNIGGISNITYLPGDASAVIGFDNGPGNTLIDTWIKQVQGEAYDKDGAWAASGKTDEQLLKQMLSHSYFSLSAPKSTGRELFNQAWLEQQTSDFGYLHESDIQSTLLDLTCHSIANDCLKLTEKAELYVCGGGAFNTELLTRLAALLPGYQVHTTASLGVDPQWVEGIAFAWLAMRHKLGLPGNLPAVTGASRETVLGGLFPGN.

An ATP-binding site is contributed by 12–19 (GTSMDGVD).

The protein belongs to the anhydro-N-acetylmuramic acid kinase family.

It carries out the reaction 1,6-anhydro-N-acetyl-beta-muramate + ATP + H2O = N-acetyl-D-muramate 6-phosphate + ADP + H(+). It functions in the pathway amino-sugar metabolism; 1,6-anhydro-N-acetylmuramate degradation. The protein operates within cell wall biogenesis; peptidoglycan recycling. In terms of biological role, catalyzes the specific phosphorylation of 1,6-anhydro-N-acetylmuramic acid (anhMurNAc) with the simultaneous cleavage of the 1,6-anhydro ring, generating MurNAc-6-P. Is required for the utilization of anhMurNAc either imported from the medium or derived from its own cell wall murein, and thus plays a role in cell wall recycling. This is Anhydro-N-acetylmuramic acid kinase from Shewanella loihica (strain ATCC BAA-1088 / PV-4).